The following is a 306-amino-acid chain: MGCDGGTIPKRHELVKGPKKVEKVDKDAELVAQWNYCTLSQEVLRRPIVACELGRLYNKDAVIEFLLDKSAEKALGKATSHIRSIKNVTELKLSDNPAWEGDKGNTKGDKHDDLQRARFICPVVGLEMNGRHRFCFLRCCGCVFSERALKEIKAEVCHTCGAAFQEEDIIVLNGTKEDVEMLKRRMEERRLRAKLEKKTKKPKTAESASKLGISQDSAGPSKAKAGKSEEADPDPREKKSSLAPRGTASNGSASGKVGKPPCGALKRSIADSEESETYKSIFTSHSSAKRSKEESAHWVTHTSYCF.

Residues 192-306 (RAKLEKKTKK…HWVTHTSYCF (115 aa)) are disordered. The span at 226 to 240 (GKSEEADPDPREKKS) shows a compositional bias: basic and acidic residues. Residue Ser-287 is modified to Phosphoserine.

Belongs to the rtf2 family. In terms of assembly, interacts with DDI2; probably also interacts with DDI1. Undergoes proteasomal degradation, via DDI1 and DDI2. Removal from stalled replisomes and degradation are required for genome stability.

The protein localises to the chromosome. In terms of biological role, replication termination factor which is a component of the elongating replisome. Required for ATR pathway signaling upon DNA damage and has a positive activity during DNA replication. Might function to facilitate fork pausing at replication fork barriers like the rDNA. May be globally required to stimulate ATR signaling after the fork stalls or encounters a lesion. Interacts with nascent DNA. The polypeptide is Replication termination factor 2 (Rattus norvegicus (Rat)).